Here is a 31-residue protein sequence, read N- to C-terminus: Ranatuerin-2Ca (31 aa).

Residues C24 and C29 are joined by a disulfide bond.

In terms of tissue distribution, expressed by the skin glands.

It localises to the secreted. Its function is as follows. Antibacterial activity against Gram-positive bacterium S.aureus and Gram-negative bacterium E.coli. Has activity against C.albicans. In Lithobates clamitans (Green frog), this protein is Ranatuerin-2Ca.